The following is a 524-amino-acid chain: Chromosomal replication initiator protein DnaA (524 aa).

The segment at 1-85 is domain I, interacts with DnaA modulators; the sequence is MSQNSSSLLE…TRVLSLRMGR (85 aa). A domain II region spans residues 85-182; the sequence is RSFSLAVSVE…TPAHNPNREV (98 aa). A disordered region spans residues 95–183; that stretch reads PEQEIPETPA…PAHNPNREVS (89 aa). Over residues 148–158 the composition is skewed to pro residues; sequence APEPHPAPIAD. The tract at residues 183-399 is domain III, AAA+ region; that stretch reads SLNPKYTFES…GALIRVSAYS (217 aa). Residues G227, G229, K230, and T231 each coordinate ATP. The interval 400 to 524 is domain IV, binds dsDNA; it reads SLINQPIDKE…TQLIKSRGRN (125 aa).

This sequence belongs to the DnaA family. In terms of assembly, oligomerizes as a right-handed, spiral filament on DNA at oriC.

The protein resides in the cytoplasm. Functionally, plays an essential role in the initiation and regulation of chromosomal replication. ATP-DnaA binds to the origin of replication (oriC) to initiate formation of the DNA replication initiation complex once per cell cycle. Binds the DnaA box (a 9 base pair repeat at the origin) and separates the double-stranded (ds)DNA. Forms a right-handed helical filament on oriC DNA; dsDNA binds to the exterior of the filament while single-stranded (ss)DNA is stabiized in the filament's interior. The ATP-DnaA-oriC complex binds and stabilizes one strand of the AT-rich DNA unwinding element (DUE), permitting loading of DNA polymerase. After initiation quickly degrades to an ADP-DnaA complex that is not apt for DNA replication. Binds acidic phospholipids. The protein is Chromosomal replication initiator protein DnaA of Corynebacterium glutamicum (strain ATCC 13032 / DSM 20300 / JCM 1318 / BCRC 11384 / CCUG 27702 / LMG 3730 / NBRC 12168 / NCIMB 10025 / NRRL B-2784 / 534).